The following is a 152-amino-acid chain: Phospholipase A2 pkP2 (152 aa).

An N-terminal signal peptide occupies residues 1-21; the sequence is MNPAHLLVLLAVCVSLLGASA. Positions 22–27 are excised as a propeptide; the sequence is IPPLPL. Intrachain disulfides connect Cys-38-Cys-104, Cys-54-Cys-151, Cys-56-Cys-72, Cys-71-Cys-132, Cys-78-Cys-125, Cys-88-Cys-118, and Cys-111-Cys-123. Ca(2+) contacts are provided by Tyr-55, Gly-57, and Gly-59. The active site involves His-75. Asp-76 contacts Ca(2+). Residue Asp-126 is part of the active site.

This sequence belongs to the phospholipase A2 family. Group I subfamily. Ca(2+) is required as a cofactor.

It is found in the secreted. The enzyme catalyses a 1,2-diacyl-sn-glycero-3-phosphocholine + H2O = a 1-acyl-sn-glycero-3-phosphocholine + a fatty acid + H(+). PA2 catalyzes the calcium-dependent hydrolysis of the 2-acyl groups in 3-sn-phosphoglycerides. The sequence is that of Phospholipase A2 pkP2 from Laticauda semifasciata (Black-banded sea krait).